We begin with the raw amino-acid sequence, 304 residues long: MWFKNLQLHRLPAPWKVSVEQMEKWLAPHAFQPANSVETTRQGWTSPRNNGSLVYSINQQMLITYRAEKKLLPASVVTQVTKARALELEEQQGFKPGRKQMRDLKEQVTDELLPRAFSIQRDTRVWIDTVNGWLVIDAASQALGDDVLGLLVKSVDRLPISSVRVAQAPVAAMTNWLLAGEGPVNFTLDQDTELRSPAEGNATVRYVGHALEADDMRRHIEAGKQCMRLAMTWNDRVSFVMTPSLTIKRVTALDVIKEASDPTAQNDDEQFDSDFTLMTGELAKLFDGVVDALGGELDEGSKAA.

Belongs to the RdgC family.

Its subcellular location is the cytoplasm. It localises to the nucleoid. Functionally, may be involved in recombination. This chain is Recombination-associated protein RdgC, found in Paraburkholderia phymatum (strain DSM 17167 / CIP 108236 / LMG 21445 / STM815) (Burkholderia phymatum).